The sequence spans 251 residues: Phosphate import ATP-binding protein PstB (251 aa).

Residues 5–246 (IKIRGVNFFY…PKDKRTEDYI (242 aa)) enclose the ABC transporter domain. 37 to 44 (GPSGCGKS) is a binding site for ATP.

Belongs to the ABC transporter superfamily. Phosphate importer (TC 3.A.1.7) family. As to quaternary structure, the complex is composed of two ATP-binding proteins (PstB), two transmembrane proteins (PstC and PstA) and a solute-binding protein (PstS).

The protein localises to the cell membrane. The enzyme catalyses phosphate(out) + ATP + H2O = ADP + 2 phosphate(in) + H(+). In terms of biological role, part of the ABC transporter complex PstSACB involved in phosphate import. Responsible for energy coupling to the transport system. This chain is Phosphate import ATP-binding protein PstB, found in Dehalococcoides mccartyi (strain ATCC BAA-2266 / KCTC 15142 / 195) (Dehalococcoides ethenogenes (strain 195)).